Reading from the N-terminus, the 243-residue chain is Phosphoribosylaminoimidazole-succinocarboxamide synthase (243 aa).

Belongs to the SAICAR synthetase family.

The catalysed reaction is 5-amino-1-(5-phospho-D-ribosyl)imidazole-4-carboxylate + L-aspartate + ATP = (2S)-2-[5-amino-1-(5-phospho-beta-D-ribosyl)imidazole-4-carboxamido]succinate + ADP + phosphate + 2 H(+). Its pathway is purine metabolism; IMP biosynthesis via de novo pathway; 5-amino-1-(5-phospho-D-ribosyl)imidazole-4-carboxamide from 5-amino-1-(5-phospho-D-ribosyl)imidazole-4-carboxylate: step 1/2. This is Phosphoribosylaminoimidazole-succinocarboxamide synthase from Thermosynechococcus vestitus (strain NIES-2133 / IAM M-273 / BP-1).